We begin with the raw amino-acid sequence, 691 residues long: Elongation factor G (691 aa).

Residues 8–282 (HMVRNIGIAA…AVVDYLPAPD (275 aa)) form the tr-type G domain. GTP is bound by residues 17-24 (AHIDAGKT), 81-85 (DTPGH), and 135-138 (NKMD).

The protein belongs to the TRAFAC class translation factor GTPase superfamily. Classic translation factor GTPase family. EF-G/EF-2 subfamily.

Its subcellular location is the cytoplasm. Its function is as follows. Catalyzes the GTP-dependent ribosomal translocation step during translation elongation. During this step, the ribosome changes from the pre-translocational (PRE) to the post-translocational (POST) state as the newly formed A-site-bound peptidyl-tRNA and P-site-bound deacylated tRNA move to the P and E sites, respectively. Catalyzes the coordinated movement of the two tRNA molecules, the mRNA and conformational changes in the ribosome. This Campylobacter hominis (strain ATCC BAA-381 / DSM 21671 / CCUG 45161 / LMG 19568 / NCTC 13146 / CH001A) protein is Elongation factor G.